The chain runs to 308 residues: Methionyl-tRNA formyltransferase (308 aa).

Residue 109-112 (SLLP) coordinates (6S)-5,6,7,8-tetrahydrofolate.

Belongs to the Fmt family.

It catalyses the reaction L-methionyl-tRNA(fMet) + (6R)-10-formyltetrahydrofolate = N-formyl-L-methionyl-tRNA(fMet) + (6S)-5,6,7,8-tetrahydrofolate + H(+). Attaches a formyl group to the free amino group of methionyl-tRNA(fMet). The formyl group appears to play a dual role in the initiator identity of N-formylmethionyl-tRNA by promoting its recognition by IF2 and preventing the misappropriation of this tRNA by the elongation apparatus. The sequence is that of Methionyl-tRNA formyltransferase from Clostridium beijerinckii (strain ATCC 51743 / NCIMB 8052) (Clostridium acetobutylicum).